Consider the following 760-residue polypeptide: NAD(P)H-quinone oxidoreductase subunit 5, chloroplastic (760 aa).

16 consecutive transmembrane segments (helical) span residues 9–29 (WIISFVTLPVPMLIGMGLLLF), 39–59 (IWAFPSVLLLSIVMVFSIDLF), 89–109 (IDPLTSILLILITTVGILVLV), 125–145 (FVYMSFFNTSMLGLVTSSNLI), 147–167 (IYIFWELVGMCSYLLIGFWFT), 185–205 (GDFGLLLGILGLYWITGSFEF), 221–241 (NEVHFLFVTLCAFLLFSGAIA), 260–280 (TPISALIHAATMVAAGIFLVA), 282–302 (LLPLFVVIPYIMKLIALIGII), 329–349 (LGYTMLALGMGSYRAALFHLI), 356–376 (ALLFLGSGSIIHSMEVIVGYS), 398–418 (IAFLLGTLSLCGIPPLACFWS), 429–449 (YSPIFAIIAFSTAGLTAFYMF), 556–576 (ILFPMLVLVLFTLFIGAIGIP), 620–640 (FSVSIASFGIFIASSLYKPIY), and 734–754 (FYLLLYLFYVLIFLLISSSIF).

It belongs to the complex I subunit 5 family. As to quaternary structure, NDH is composed of at least 16 different subunits, 5 of which are encoded in the nucleus.

It is found in the plastid. The protein localises to the chloroplast thylakoid membrane. The enzyme catalyses a plastoquinone + NADH + (n+1) H(+)(in) = a plastoquinol + NAD(+) + n H(+)(out). The catalysed reaction is a plastoquinone + NADPH + (n+1) H(+)(in) = a plastoquinol + NADP(+) + n H(+)(out). Its function is as follows. NDH shuttles electrons from NAD(P)H:plastoquinone, via FMN and iron-sulfur (Fe-S) centers, to quinones in the photosynthetic chain and possibly in a chloroplast respiratory chain. The immediate electron acceptor for the enzyme in this species is believed to be plastoquinone. Couples the redox reaction to proton translocation, and thus conserves the redox energy in a proton gradient. This Populus trichocarpa (Western balsam poplar) protein is NAD(P)H-quinone oxidoreductase subunit 5, chloroplastic (ndhF).